The sequence spans 249 residues: uncharacterized protein (249 aa).

Residues 51–67 show a composition bias toward polar residues; the sequence is IPKDSLTNGKSSKNCMS. Disordered stretches follow at residues 51 to 131 and 205 to 240; these read IPKD…DSPV and YLNA…SSDG. Low complexity predominate over residues 93-106; that stretch reads SFQSMNSSMSSSTQ. The span at 110–129 shows a compositional bias: basic and acidic residues; it reads RILDEKNKDQSSSNENDRDS.

Belongs to the asfivirus DP238L family.

This is an uncharacterized protein from African swine fever virus (isolate Tick/Malawi/Lil 20-1/1983) (ASFV).